A 367-amino-acid polypeptide reads, in one-letter code: MFLKKIYIKNFRNHEETQLTFKSRLVFFIGNNGEGKTNLLESISLLSYLKSFRESDQNQLLRWDTSDTFIRAEFESEGNEYLFEYGIEHSQTKRKKLKVNGEEFKKISDYVGYFRSIVMSPPDILIIEDGNVERRRFLDAFISSTNRYYLKQLIEYERLIKQRNAALKKENASDREIGIWDEPIIEHDSEIREIRTKTIQSLAGYFHQNLLQLSSGKDPYFLTYKPNITSKEEHKQKLIDNLRKDKAIGYTSCGNHRDTLPIGFDDKDLSGFGSQGQKRSAVIALKTACFQMIRDTTGEAPVLLIDDIIRELDVKRREYFVNLISECGQAFFTTTDLEGINEYVGNLTVDKEIYIIDSGKVKVFTEI.

ATP is bound at residue 30–37 (GNNGEGKT).

Belongs to the RecF family.

The protein localises to the cytoplasm. In terms of biological role, the RecF protein is involved in DNA metabolism; it is required for DNA replication and normal SOS inducibility. RecF binds preferentially to single-stranded, linear DNA. It also seems to bind ATP. This is DNA replication and repair protein RecF from Leptospira biflexa serovar Patoc (strain Patoc 1 / Ames).